The following is a 284-amino-acid chain: Tropomyosin (284 aa).

The tract at residues 1 to 47 (MDAIKKKMQAMKIEKDNAMDRADAAEEKARQQQERVEKLEEELRDTQ) is disordered. Residues 1 to 284 (MDAIKKKMQA…DQTFQELSGY (284 aa)) adopt a coiled-coil conformation. The segment covering 12 to 38 (KIEKDNAMDRADAAEEKARQQQERVEK) has biased composition (basic and acidic residues).

The protein belongs to the tropomyosin family. In terms of assembly, homodimer.

Its function is as follows. Tropomyosin, in association with the troponin complex, plays a central role in the calcium dependent regulation of muscle contraction. The polypeptide is Tropomyosin (Trichinella pseudospiralis (Parasitic roundworm)).